We begin with the raw amino-acid sequence, 644 residues long: G-protein coupled receptor-associated protein LMBRD2 (644 aa).

At Met-1–Val-4 the chain is on the extracellular side. Residues Ser-5–Ile-27 form a helical membrane-spanning segment. At Arg-28–Asn-31 the chain is on the cytoplasmic side. A helical membrane pass occupies residues Pro-32 to Leu-52. Residues Pro-53–Arg-102 lie on the Extracellular side of the membrane. N-linked (GlcNAc...) asparagine glycosylation occurs at Asn-73. A helical membrane pass occupies residues Val-103–Val-123. The Cytoplasmic portion of the chain corresponds to Thr-124–Tyr-145. Residues Ala-146 to Ile-166 traverse the membrane as a helical segment. Residues Asn-167–Lys-172 lie on the Extracellular side of the membrane. Residues Val-173–His-193 form a helical membrane-spanning segment. Over Gly-194–Leu-369 the chain is Cytoplasmic. Residues Tyr-216–Asn-245 adopt a coiled-coil conformation. Residues Gly-370 to Val-390 traverse the membrane as a helical segment. The Extracellular segment spans residues Ser-391–Tyr-412. Residues Thr-413–Phe-433 form a helical membrane-spanning segment. Residues Arg-434–Ser-453 are Cytoplasmic-facing. The chain crosses the membrane as a helical span at residues Ile-454–Gly-474. Topologically, residues Met-475–Asp-502 are extracellular. A helical membrane pass occupies residues Val-503–Cys-523. Residues Ala-524–Met-644 lie on the Cytoplasmic side of the membrane. The segment covering Ser-567 to Gln-576 has biased composition (basic and acidic residues). Positions Ser-567–Met-644 are disordered. The segment covering Asn-578 to Asn-594 has biased composition (low complexity). Over residues Val-621 to Met-644 the composition is skewed to polar residues.

This sequence belongs to the LIMR family.

The protein resides in the cell membrane. May associate with G-protein coupled receptors and regulate downstream signaling pathways. This Caenorhabditis briggsae protein is G-protein coupled receptor-associated protein LMBRD2.